The chain runs to 151 residues: uncharacterized protein (151 aa).

The disordered stretch occupies residues Met1 to Arg77. 2 stretches are compositionally biased toward low complexity: residues Pro19–Asn54 and Ser63–Ser76.

This is an uncharacterized protein from Methanothermobacter marburgensis (strain ATCC BAA-927 / DSM 2133 / JCM 14651 / NBRC 100331 / OCM 82 / Marburg) (Methanobacterium thermoautotrophicum).